Consider the following 201-residue polypeptide: Ras-related protein Rab-9B (201 aa).

10 residues coordinate GTP: valine 18, glycine 19, lysine 20, serine 21, serine 22, aspartate 33, serine 34, alanine 36, histidine 38, and threonine 39. Serine 21 provides a ligand contact to Mg(2+). The Switch 1 motif lies at 31–42 (KFDSQAFHTIGV). Phosphoserine is present on serine 34. Positions 39 and 62 each coordinate Mg(2+). Residues 64–78 (AGQERFKSLRTPFYR) carry the Switch 2 motif. GTP contacts are provided by glycine 65, asparagine 124, lysine 125, alanine 155, and lysine 156. Residues cysteine 200 and cysteine 201 are each lipidated (S-geranylgeranyl cysteine).

Belongs to the small GTPase superfamily. Rab family. In terms of assembly, interacts (GTP-bound form) with SGSM1; the GDP-bound form has much lower affinity for SGSM1. The GTP-bound form but not the GDP-bound form interacts with HPS4 and the BLOC-3 complex (heterodimer of HPS1 and HPS4) but does not interact with HPS1 alone. Interacts (GTP-bound form) with NDE1. Mg(2+) is required as a cofactor.

It localises to the cell membrane. It is found in the cytoplasmic vesicle. Its subcellular location is the phagosome membrane. The catalysed reaction is GTP + H2O = GDP + phosphate + H(+). Regulated by guanine nucleotide exchange factors (GEFs) which promote the exchange of bound GDP for free GTP. Regulated by GTPase activating proteins (GAPs) which increase the GTP hydrolysis activity. Inhibited by GDP dissociation inhibitors (GDIs). Functionally, the small GTPases Rab are key regulators of intracellular membrane trafficking, from the formation of transport vesicles to their fusion with membranes. Rabs cycle between an inactive GDP-bound form and an active GTP-bound form that is able to recruit to membranes different sets of downstream effectors directly responsible for vesicle formation, movement, tethering and fusion. RAB9B is involved in the transport of proteins between the endosomes and the trans Golgi network. May use NDE1/NDEL1 as an effector to interact with the dynein motor complex in order to control retrograde trafficking of RAB9-associated late endosomes to the TGN. The polypeptide is Ras-related protein Rab-9B (RAB9B) (Pongo abelii (Sumatran orangutan)).